Consider the following 110-residue polypeptide: Large ribosomal subunit protein uL22 (110 aa).

This sequence belongs to the universal ribosomal protein uL22 family. As to quaternary structure, part of the 50S ribosomal subunit.

Its function is as follows. This protein binds specifically to 23S rRNA; its binding is stimulated by other ribosomal proteins, e.g. L4, L17, and L20. It is important during the early stages of 50S assembly. It makes multiple contacts with different domains of the 23S rRNA in the assembled 50S subunit and ribosome. Functionally, the globular domain of the protein is located near the polypeptide exit tunnel on the outside of the subunit, while an extended beta-hairpin is found that lines the wall of the exit tunnel in the center of the 70S ribosome. This chain is Large ribosomal subunit protein uL22, found in Maridesulfovibrio salexigens (strain ATCC 14822 / DSM 2638 / NCIMB 8403 / VKM B-1763) (Desulfovibrio salexigens).